Here is a 504-residue protein sequence, read N- to C-terminus: Maturase K (504 aa).

Belongs to the intron maturase 2 family. MatK subfamily.

It localises to the plastid. The protein localises to the chloroplast. Usually encoded in the trnK tRNA gene intron. Probably assists in splicing its own and other chloroplast group II introns. This is Maturase K from Quercus lyrata (Overcup oak).